The chain runs to 318 residues: Ferrochelatase (318 aa).

Positions 186 and 264 each coordinate Fe cation.

The protein belongs to the ferrochelatase family.

It localises to the cytoplasm. It carries out the reaction heme b + 2 H(+) = protoporphyrin IX + Fe(2+). The protein operates within porphyrin-containing compound metabolism; protoheme biosynthesis; protoheme from protoporphyrin-IX: step 1/1. Its function is as follows. Catalyzes the ferrous insertion into protoporphyrin IX. The polypeptide is Ferrochelatase (Chlamydia caviae (strain ATCC VR-813 / DSM 19441 / 03DC25 / GPIC) (Chlamydophila caviae)).